Reading from the N-terminus, the 390-residue chain is Pyruvate dehydrogenase E1 component subunit alpha, somatic form, mitochondrial (390 aa).

The N-terminal 29 residues, 1 to 29 (MRKMLAAVSRVLAGAAQKPASRVLVASRN), are a transit peptide targeting the mitochondrion. K63 carries the post-translational modification N6-acetyllysine; alternate. K63 carries the N6-succinyllysine; alternate modification. H92, Y118, R119, A157, G165, V167, D196, G197, A198, N225, and Y227 together coordinate pyruvate. Residues Y118 and R119 each contribute to the thiamine diphosphate site. The thiamine diphosphate site is built by G165, V167, D196, G197, A198, and N225. D196 is a binding site for Mg(2+). Positions 225 and 227 each coordinate Mg(2+). Phosphoserine; by PDK1 is present on S232. The residue at position 244 (K244) is an N6-acetyllysine; alternate. K244 bears the N6-succinyllysine; alternate mark. The residue at position 267 (K267) is an N6-acetyllysine. Position 277 is an N6-succinyllysine (K277). Position 292 (H292) interacts with thiamine diphosphate. S293 carries the post-translational modification Phosphoserine; by PDK1, PDK2, PDK3 and PDK4. At S295 the chain carries Phosphoserine. The residue at position 300 (S300) is a Phosphoserine; by PDK1, PDK2, PDK3 and PDK4. Y301 bears the Phosphotyrosine mark. An N6-acetyllysine; alternate modification is found at K313. K313 carries the N6-succinyllysine; alternate modification. N6-acetyllysine is present on residues K321 and K336. Position 385 is an N6-succinyllysine (K385).

Heterotetramer of two PDHA1 and two PDHB subunits. The heterotetramer interacts with DLAT, and is part of the multimeric pyruvate dehydrogenase complex that contains multiple copies of pyruvate dehydrogenase (E1), dihydrolipoamide acetyltransferase (DLAT, E2) and lipoamide dehydrogenase (DLD, E3). These subunits are bound to an inner core composed of about 48 DLAT and 12 PDHX molecules. Thiamine diphosphate is required as a cofactor. Mg(2+) serves as cofactor. In terms of processing, phosphorylation at Ser-232, Ser-293 and Ser-300 by PDK family kinases inactivates the enzyme; for this phosphorylation at a single site is sufficient. Phosphorylation at Ser-293 interferes with access to active site, and thereby inactivates the enzyme. Dephosphorylation at all three sites, i.e. at Ser-232, Ser-293 and Ser-300, is required for reactivation. Acetylation alters the phosphorylation pattern. Deacetylated by SIRT3. As to expression, in all tissues, but in very low amount in testis.

It localises to the mitochondrion matrix. The catalysed reaction is N(6)-[(R)-lipoyl]-L-lysyl-[protein] + pyruvate + H(+) = N(6)-[(R)-S(8)-acetyldihydrolipoyl]-L-lysyl-[protein] + CO2. With respect to regulation, pyruvate dehydrogenase activity is inhibited by phosphorylation of PDHA1; it is reactivated by dephosphorylation. In terms of biological role, the pyruvate dehydrogenase complex catalyzes the overall conversion of pyruvate to acetyl-CoA and CO(2), and thereby links the glycolytic pathway to the tricarboxylic cycle. In Rattus norvegicus (Rat), this protein is Pyruvate dehydrogenase E1 component subunit alpha, somatic form, mitochondrial (Pdha1).